We begin with the raw amino-acid sequence, 217 residues long: Transmembrane protein 253 (217 aa).

4 helical membrane passes run 33-53 (LVLA…AVSV), 62-82 (MATA…TVTL), 96-116 (MMIF…VEVM), and 138-158 (LSAE…LFLL). Residues 187 to 217 (PGLENGPTVASTGANERVGQREQTRAALLPP) form a disordered region.

The protein localises to the membrane. The sequence is that of Transmembrane protein 253 (TMEM253) from Homo sapiens (Human).